Consider the following 354-residue polypeptide: Membrane progestin receptor beta (354 aa).

At 1 to 75 the chain is on the cytoplasmic side; that stretch reads MTTAILERLS…FFSLFQKHNE (75 aa). A helical transmembrane segment spans residues 76-96; sequence VVNVWTHLLAALAVLLRFWAF. Topologically, residues 97–111 are extracellular; sequence AEAEALPWASTHSLP. Residues 112–132 traverse the membrane as a helical segment; that stretch reads LLLFILSSITYLTCSLLAHLL. The Cytoplasmic portion of the chain corresponds to 133–174; the sequence is QSKSELSHYTFYFVDYVGVSVYQYGSALAHFFYSSDQAWYDR. A helical transmembrane segment spans residues 175–195; sequence FWLFFLPAAAFCGWLSCAGCC. At 196–213 the chain is on the extracellular side; that stretch reads YAKYRYRRPYPVMRKICQ. Residues 214-234 form a helical membrane-spanning segment; the sequence is VVPAGLAFILDISPVAHRVAL. The Cytoplasmic portion of the chain corresponds to 235–243; that stretch reads CHLAGCQEQ. The helical transmembrane segment at 244 to 264 threads the bilayer; it reads AAWYHTLQILFFLVSAYFFSC. Residues 265 to 283 are Extracellular-facing; the sequence is PVPEKYFPGSCDIVGHGHQ. A helical membrane pass occupies residues 284 to 304; the sequence is IFHAFLSICTLSQLEAILLDY. The Cytoplasmic portion of the chain corresponds to 305–319; sequence QGRQEIFLQRHGPLS. Residues 320–340 form a helical membrane-spanning segment; sequence VHMACLSFFFLAACSAATAAL. Topologically, residues 341–354 are extracellular; the sequence is LRHKVKARLTKKDS.

This sequence belongs to the ADIPOR family. Highly expressed in the hypothalamus. Also expressed in spinal cord, kidney and testis.

The protein localises to the cell membrane. In terms of biological role, plasma membrane progesterone (P4) receptor coupled to G proteins. Seems to act through a G(i) mediated pathway. May be involved in oocyte maturation. Also binds dehydroepiandrosterone (DHEA), pregnanolone, pregnenolone and allopregnanolone. The polypeptide is Membrane progestin receptor beta (Homo sapiens (Human)).